A 245-amino-acid polypeptide reads, in one-letter code: Transcriptional activator protein ExpR (245 aa).

The region spanning 173–238 is the HTH luxR-type domain; sequence RSNDKDIFSQ…HAIRLGIELQ (66 aa). Positions 197 to 216 form a DNA-binding region, H-T-H motif; sequence YQEIALILDIKTGTVKFHIG.

This sequence belongs to the autoinducer-regulated transcriptional regulatory protein family.

Functions as an OHLL responsive transcriptional regulator that acts in virulence (soft rot disease) through the activation of genes for plant tissue macerating enzymes. The chain is Transcriptional activator protein ExpR (expR) from Pectobacterium parmentieri.